The primary structure comprises 403 residues: Prostaglandin E2 receptor EP1 subtype (403 aa).

At 1–38 (MSLCGPLNLSLAGEATPCAEPGAPNASAWPPSGRASAS) the chain is on the extracellular side. Asparagine 8 and asparagine 25 each carry an N-linked (GlcNAc...) asparagine glycan. A helical transmembrane segment spans residues 39-65 (PALPIFSMTLGAVSNVLALALLAQAAG). The Cytoplasmic segment spans residues 66 to 75 (RLRRRRSAAT). Residues 76–99 (FLLFVASLLATDLAGHVIPGALVL) traverse the membrane as a helical segment. At 100-114 (RLYAAGRSPAGGACH) the chain is on the extracellular side. A disulfide bridge links cysteine 113 with cysteine 191. Residues 115-136 (FLGGCMVFFGLCPLLLGCGMAV) traverse the membrane as a helical segment. Topologically, residues 137–158 (ERCVGVTRPLLHAARVSAARAR) are cytoplasmic. Residues 159–180 (LALAVLAALALAVALLPLARVG) form a helical membrane-spanning segment. Residues 181–204 (RYELQYPGTWCFIGLRPAGGWRQA) lie on the Extracellular side of the membrane. Residues 205-230 (LLAGLFAGLGLAALLAALVCNTLSGL) form a helical membrane-spanning segment. Topologically, residues 231-295 (ALLRARWRRR…ARRARAHDVE (65 aa)) are cytoplasmic. The interval 243–287 (RRRPQACGPDGRRHWGARAPRSASASSSSSVASVPGGSPGRGSAR) is disordered. The span at 259 to 278 (ARAPRSASASSSSSVASVPG) shows a compositional bias: low complexity. The helical transmembrane segment at 296–322 (MVGQLVGIMVVSCICWSPLLVLVVLAV) threads the bilayer. The Extracellular segment spans residues 323-333 (GGWGSSSLQRP). A helical transmembrane segment spans residues 334–355 (LFLAVRLASWNQILDPWVYILL). At 356–403 (RQAVLRQLLRLLPPRPGAKGSPAGLALTRSAWEASSLRSSRHSSLSHL) the chain is on the cytoplasmic side.

It belongs to the G-protein coupled receptor 1 family.

It localises to the cell membrane. Its function is as follows. Receptor for prostaglandin E2 (PGE2). The activity of this receptor is mediated by G(q) proteins which activate a phosphatidylinositol-calcium second messenger system. May play a role as an important modulator of renal function. Implicated the smooth muscle contractile response to PGE2 in various tissues. This is Prostaglandin E2 receptor EP1 subtype (PTGER1) from Canis lupus familiaris (Dog).